The primary structure comprises 92 residues: Small ribosomal subunit protein uS19c (92 aa).

Belongs to the universal ribosomal protein uS19 family.

The protein localises to the plastid. The protein resides in the chloroplast. Functionally, protein S19 forms a complex with S13 that binds strongly to the 16S ribosomal RNA. This Porphyra purpurea (Red seaweed) protein is Small ribosomal subunit protein uS19c (rps19).